The chain runs to 369 residues: MLKSKVHFWTLQILFVLLIIFVATKVSFVFQPFIVFISTLFFPMLIAGILYFIFNPVVRLLEKKIPRTLSILLIYLLFIGLLAFISASVGPIITAQVTGLFNNLPDYIKQIQALTKDLSHSQWFTWMMNQDYVSISKIEQSLTSFLQNLPQNITSSLSAVFGVVTNITLVIITVPFILFYMLKDGHRFPHLAVKILPASYRTEGLKIFKDLSDTLAAYFQGQLLICLFVGTACFIGYLIAGLPYALILGIVMAITNIIPYVGPFLGAAPAVIVGFMDSPAKALFAIIVVVIVQQLDGNLLSPLVIGKRLNTHPLTIILLLIGAGSFGGILGMILAVPVYAVVKAFFLNIVRLIKLRQRSRLEENAKPAE.

Helical transmembrane passes span 13–33 (ILFVLLIIFVATKVSFVFQPF), 34–54 (IVFISTLFFPMLIAGILYFIF), 73–93 (LIYLLFIGLLAFISASVGPII), 159–179 (AVFGVVTNITLVIITVPFILF), 213–233 (DTLAAYFQGQLLICLFVGTAC), 234–254 (FIGYLIAGLPYALILGIVMAI), 271–291 (VIVGFMDSPAKALFAIIVVVI), and 316–336 (IILLLIGAGSFGGILGMILAV).

The protein belongs to the autoinducer-2 exporter (AI-2E) (TC 2.A.86) family.

The protein resides in the cell membrane. The protein is Putative transport protein YueF (yueF) of Bacillus subtilis (strain 168).